The following is a 278-amino-acid chain: Small ribosomal subunit protein uS5 (278 aa).

Residues 1–43 are disordered; that stretch reads MADAPAPAGGRGGFRGGFGGRGRGRGRGRGRGRGRGRGAKDGD. The segment covering 9–21 has biased composition (gly residues); that stretch reads GGRGGFRGGFGGR. Basic residues predominate over residues 22–37; the sequence is GRGRGRGRGRGRGRGR. The region spanning 88 to 151 is the S5 DRBM domain; that stretch reads LKDEVLKIMP…ILAKLSVVPV (64 aa).

Belongs to the universal ribosomal protein uS5 family.

In terms of biological role, component of the ribosome, a large ribonucleoprotein complex responsible for the synthesis of proteins in the cell. The small ribosomal subunit (SSU) binds messenger RNAs (mRNAs) and translates the encoded message by selecting cognate aminoacyl-transfer RNA (tRNA) molecules. The large subunit (LSU) contains the ribosomal catalytic site termed the peptidyl transferase center (PTC), which catalyzes the formation of peptide bonds, thereby polymerizing the amino acids delivered by tRNAs into a polypeptide chain. The nascent polypeptides leave the ribosome through a tunnel in the LSU and interact with protein factors that function in enzymatic processing, targeting, and the membrane insertion of nascent chains at the exit of the ribosomal tunnel. Plays a role in the assembly and function of the 40S ribosomal subunit. Mutations in this protein affects the control of translational fidelity. Involved in nucleolar processing of pre-18S ribosomal RNA and ribosome assembly. This chain is Small ribosomal subunit protein uS5 (RPS2), found in Urechis caupo (Innkeeper worm).